Here is a 637-residue protein sequence, read N- to C-terminus: Chaperone protein DnaK (637 aa).

Phosphothreonine; by autocatalysis is present on T196. 2 disordered regions span residues 484 to 528 (KATG…EVDT) and 598 to 637 (TEAG…VDDK). Positions 501-528 (SETEIEKMKKDASSHADEDKKKKEEVDT) are enriched in basic and acidic residues. Over residues 600–620 (AGAPGAAGAAGAAGQGQSASS) the composition is skewed to low complexity. The segment covering 621–637 (GKDDEVKNADFEVVDDK) has biased composition (basic and acidic residues).

Belongs to the heat shock protein 70 family.

Its function is as follows. Acts as a chaperone. This Chloroherpeton thalassium (strain ATCC 35110 / GB-78) protein is Chaperone protein DnaK.